The following is a 245-amino-acid chain: Lytic switch protein BZLF1 (245 aa).

The interval 1–167 (MMDPNSTSED…RTRKPLQPES (167 aa)) is transactivation. Phosphothreonine is present on residues Thr14 and Thr159. The disordered stretch occupies residues 140-167 (QLADIGAPQPAPAAAPARRTRKPLQPES). The short motif at 157–194 (RRTRKPLQPESLEECDSELDIKRYKNRVASRKCRAKFK) is the Bipartite nuclear localization signal element. 3 positions are modified to phosphoserine: Ser167, Ser173, and Ser186. The interval 178–195 (KRYKNRVASRKCRAKFKH) is basic motif. Residues 178–228 (KRYKNRVASRKCRAKFKHLLQHYREVASAKSSENDRLRLLLKQMCPSLDVD) form the bZIP domain. The segment at 196–228 (LLQHYREVASAKSSENDRLRLLLKQMCPSLDVD) is leucine-zipper. The accessory activation domain stretch occupies residues 229–245 (SIIPRTPDVLHEDLLNF).

Belongs to the bZIP family. Homodimer. Interacts (via b-ZIP domain) with the DNA polymerase processivity factor BMRF1 (via N-terminus); this interaction may inhibit BZLF1-induced transcription of the BMRF1 promoter. Interacts with human UBN1, CRTC2 and RACK1. Interacts (via N-terminus) with human PAX5 (via N-terminus); this interaction inhibits BZLF1-mediated lytic viral reactivation. Interacts (via leucine-zipper domain) with host CEBPA; this interaction induces G1 host cell cycle arrest. Interacts (via C-terminus) with host TP53BP1 (via C-terminus); this interaction is involved in the activation of the viral lytic cycle. Interacts with host chromatin-remodeling ATPase INO80; this interaction participates to the activation of early lytic viral genes by BZLF1. Interacts with host regulator of chromatin SMARCA5/hSNF2H; this interaction participates to the activation of early lytic viral genes by BZLF1. Interacts with host PLSCR1/Phospholipid scramblase 1; this interaction negatively regulates the transcriptional regulatory activity of BZLF1 by preventing the formation of the BZLF1-CBP complex.

The protein resides in the host nucleus. Its function is as follows. Transcription factor that acts as a molecular switch to induce the transition from the latent to the lytic or productive phase of the virus cycle. Mediates the switch from the latent to the lytic cycle of infection in cells containing a highly methylated viral genome. Probably binds to silenced chromatin and recruits host chromatin-remodeling enzymes. Regulates this switch by binding to 2 types of ZEBRA response elements (ZREs): the CpG-free AP-1 like elements (latency) and the methylated CpG-containing elements (lytic replication). Activates preferentially the methylated forms of the viral lytic R (BRLF1) and Na (BRRF1) gene promoters, the latters being the first genes activated during Z-mediated reactivation in latently infected cells. BZLF1 and BRLF1 act together to trigger lytic replication. Also binds the lytic origin of replication, oriLyt. Induces G1 cell cycle arrest by stabilizing the host CCAAT/enhancer binding protein CEBPA. This function is important because the lytic cycle preferentially takes place in host cells arrested in G1. This chain is Lytic switch protein BZLF1, found in Epstein-Barr virus (strain AG876) (HHV-4).